Reading from the N-terminus, the 318-residue chain is Thymidylate synthase (318 aa).

DUMP-binding positions include R26 and 181-182 (RR). The active-site Nucleophile is the C201. Residues 221–224 (RSAD), N232, and 262–264 (HIY) each bind dUMP. D224 contacts (6R)-5,10-methylene-5,6,7,8-tetrahydrofolate. (6R)-5,10-methylene-5,6,7,8-tetrahydrofolate is bound at residue A317.

This sequence belongs to the thymidylate synthase family. Bacterial-type ThyA subfamily. In terms of assembly, homodimer.

It localises to the cytoplasm. The enzyme catalyses dUMP + (6R)-5,10-methylene-5,6,7,8-tetrahydrofolate = 7,8-dihydrofolate + dTMP. Its pathway is pyrimidine metabolism; dTTP biosynthesis. Functionally, catalyzes the reductive methylation of 2'-deoxyuridine-5'-monophosphate (dUMP) to 2'-deoxythymidine-5'-monophosphate (dTMP) while utilizing 5,10-methylenetetrahydrofolate (mTHF) as the methyl donor and reductant in the reaction, yielding dihydrofolate (DHF) as a by-product. This enzymatic reaction provides an intracellular de novo source of dTMP, an essential precursor for DNA biosynthesis. The sequence is that of Thymidylate synthase from Staphylococcus haemolyticus (strain JCSC1435).